The chain runs to 178 residues: Small ribosomal subunit protein uS5 (178 aa).

Residues 13–76 (LEERVVQINR…EAAKRNLIRV (64 aa)) form the S5 DRBM domain. Positions 156 to 178 (ASRRDMTPQELMERRTRRETEAA) are disordered.

Belongs to the universal ribosomal protein uS5 family. Part of the 30S ribosomal subunit. Contacts proteins S4 and S8.

Its function is as follows. With S4 and S12 plays an important role in translational accuracy. Functionally, located at the back of the 30S subunit body where it stabilizes the conformation of the head with respect to the body. The chain is Small ribosomal subunit protein uS5 from Chloroflexus aurantiacus (strain ATCC 29364 / DSM 637 / Y-400-fl).